The sequence spans 188 residues: ATP synthase subunit delta (188 aa).

The protein belongs to the ATPase delta chain family. In terms of assembly, F-type ATPases have 2 components, F(1) - the catalytic core - and F(0) - the membrane proton channel. F(1) has five subunits: alpha(3), beta(3), gamma(1), delta(1), epsilon(1). F(0) has three main subunits: a(1), b(2) and c(10-14). The alpha and beta chains form an alternating ring which encloses part of the gamma chain. F(1) is attached to F(0) by a central stalk formed by the gamma and epsilon chains, while a peripheral stalk is formed by the delta and b chains.

It localises to the cell inner membrane. Functionally, f(1)F(0) ATP synthase produces ATP from ADP in the presence of a proton or sodium gradient. F-type ATPases consist of two structural domains, F(1) containing the extramembraneous catalytic core and F(0) containing the membrane proton channel, linked together by a central stalk and a peripheral stalk. During catalysis, ATP synthesis in the catalytic domain of F(1) is coupled via a rotary mechanism of the central stalk subunits to proton translocation. In terms of biological role, this protein is part of the stalk that links CF(0) to CF(1). It either transmits conformational changes from CF(0) to CF(1) or is implicated in proton conduction. The chain is ATP synthase subunit delta from Rhizobium johnstonii (strain DSM 114642 / LMG 32736 / 3841) (Rhizobium leguminosarum bv. viciae).